Here is a 200-residue protein sequence, read N- to C-terminus: Interleukin 17-like protein (200 aa).

Positions M1–S26 are cleaved as a signal peptide. Residue N46 is glycosylated (N-linked (GlcNAc...) asparagine). 2 disulfides stabilise this stretch: C122–C175 and C127–C177. An N-linked (GlcNAc...) asparagine glycan is attached at N192.

It belongs to the IL-17 family. As to expression, expressed in several tissues including hemocytes, gills, mantle, adductor muscle, labial palps, digestive glands and heart with highest levels in gills and lowest levels in adductor muscle and heart.

Its subcellular location is the secreted. The polypeptide is Interleukin 17-like protein (Magallana gigas (Pacific oyster)).